The sequence spans 23 residues: Acidic phospholipase A2 Ts-A5 (23 aa).

Requires Ca(2+) as cofactor. Post-translationally, contains 7 disulfide bonds. As to expression, expressed by the venom gland.

It localises to the secreted. The enzyme catalyses a 1,2-diacyl-sn-glycero-3-phosphocholine + H2O = a 1-acyl-sn-glycero-3-phosphocholine + a fatty acid + H(+). Snake venom phospholipase A2 (PLA2) that shows a moderate inhibition of ADP-induced human platelet aggregation when tested on platelet rich plasma. Exhibits high hydrolytic activities and prefers the anionic micelles (dPPC with deoxycholate) to the zwitterionic micelles (dPPC with Triton X-100). PLA2 catalyzes the calcium-dependent hydrolysis of the 2-acyl groups in 3-sn-phosphoglycerides. This chain is Acidic phospholipase A2 Ts-A5, found in Trimeresurus stejnegeri (Chinese green tree viper).